Here is a 283-residue protein sequence, read N- to C-terminus: Adenosyl-chloride synthase (283 aa).

Substrate-binding positions include Asp11, 70 to 72 (YVY), and 128 to 131 (TWYG). Gly131 serves as a coordination point for chloride.

This sequence belongs to the SAM hydrolase / SAM-dependent halogenase family. Homotrimer.

It carries out the reaction chloride + S-adenosyl-L-methionine = 5'-chloro-5'-deoxyadenosine + L-methionine. Functionally, involved in the biosynthesis of the proteosome inhibitor salinosporamide A (SalA). Catalyzes the halogenation of S-adenosyl-L-methionine (SAM) with chloride to generate 5'-chloro-5'-deoxyadenosine (5'-CIDA) and L-methionine. It can also use bromide and iodide, producing halogenated 5'-deoxyadenosine (5'-XDA) and L-methionine, however no halogenase activity is detected in the presence of fluoride. This is Adenosyl-chloride synthase from Salinispora tropica (strain ATCC BAA-916 / DSM 44818 / JCM 13857 / NBRC 105044 / CNB-440).